We begin with the raw amino-acid sequence, 148 residues long: MPSRLRKTRKLRGHVSHGHGRIGKHRKHPGGRGNAGGLHHHRINFDKYHPGYFGKVGMRHYHLKRNQSFCPTVNLDKLWTLVSEQTRVNAAKNKTGAAPIIDVVRSGYYKVLGKGKLPKQPVIVKAKFFSRRAEEKIKGVGGACVLVA.

The segment covering 1 to 30 has biased composition (basic residues); it reads MPSRLRKTRKLRGHVSHGHGRIGKHRKHPG. The tract at residues 1-39 is disordered; it reads MPSRLRKTRKLRGHVSHGHGRIGKHRKHPGGRGNAGGLH. Histidine 39 carries the (3S)-3-hydroxyhistidine modification. N6-acetyllysine is present on residues lysine 47 and lysine 55. Serine 68 is subject to Phosphoserine. Lysine 110 bears the N6-acetyllysine mark.

This sequence belongs to the universal ribosomal protein uL15 family. Component of the large ribosomal subunit. Hydroxylated on His-39 by MINA.

It is found in the cytoplasm. Functionally, component of the large ribosomal subunit. The ribosome is a large ribonucleoprotein complex responsible for the synthesis of proteins in the cell. The sequence is that of Large ribosomal subunit protein uL15 (RPL27A) from Macaca fascicularis (Crab-eating macaque).